Here is a 238-residue protein sequence, read N- to C-terminus: Ribonuclease PH (238 aa).

Residues Arg-86 and 124 to 126 each bind phosphate; that span reads GTR.

This sequence belongs to the RNase PH family. As to quaternary structure, homohexameric ring arranged as a trimer of dimers.

The enzyme catalyses tRNA(n+1) + phosphate = tRNA(n) + a ribonucleoside 5'-diphosphate. Functionally, phosphorolytic 3'-5' exoribonuclease that plays an important role in tRNA 3'-end maturation. Removes nucleotide residues following the 3'-CCA terminus of tRNAs; can also add nucleotides to the ends of RNA molecules by using nucleoside diphosphates as substrates, but this may not be physiologically important. Probably plays a role in initiation of 16S rRNA degradation (leading to ribosome degradation) during starvation. This chain is Ribonuclease PH, found in Cupriavidus metallidurans (strain ATCC 43123 / DSM 2839 / NBRC 102507 / CH34) (Ralstonia metallidurans).